The sequence spans 70 residues: Putative membrane protein insertion efficiency factor (70 aa).

This sequence belongs to the UPF0161 family.

The protein localises to the cell membrane. In terms of biological role, could be involved in insertion of integral membrane proteins into the membrane. The sequence is that of Putative membrane protein insertion efficiency factor from Moorella thermoacetica (strain ATCC 39073 / JCM 9320).